The sequence spans 489 residues: Oxysterol-binding protein-related protein 1B (489 aa).

This sequence belongs to the OSBP family. As to expression, expressed at low levels in flowers.

Functionally, may be involved in the transport of sterols. This Arabidopsis thaliana (Mouse-ear cress) protein is Oxysterol-binding protein-related protein 1B (ORP1B).